Consider the following 302-residue polypeptide: Plant UBX domain-containing protein 3 (302 aa).

Disordered regions lie at residues 1–64 and 79–98; these read MSSK…PKHD and VEGP…TGRL. In terms of domain architecture, SEP spans 113–177; it reads PVIHNIIFWS…NLMRRDEKCP (65 aa). Residues 224-301 enclose the UBX domain; it reads ETLPSTSIQL…GLASSVVIQK (78 aa).

In terms of assembly, interacts with CDC48A.

This chain is Plant UBX domain-containing protein 3, found in Arabidopsis thaliana (Mouse-ear cress).